The primary structure comprises 750 residues: Iron-sulfur clusters transporter ATM1, mitochondrial (750 aa).

The transit peptide at 1–16 (MFIRNVKLIKPSPVRF) directs the protein to the mitochondrion. The Mitochondrial matrix portion of the chain corresponds to 17-124 (ISPIPFSFPI…PKNNLNFKIR (108 aa)). Composition is skewed to low complexity over residues 43-75 (TSNFKSTSSSSSLKSTSTSTSTSTSKTTPKTLS) and 87-100 (DNDTTSSGSSSSEN). The interval 43–100 (TSNFKSTSSSSSLKSTSTSTSTSTSKTTPKTLSKPPPKVKPPIQDNDTTSSGSSSSEN) is disordered. A helical membrane pass occupies residues 125–146 (VIIALSLLVGAKILNVQVPFYF). The ABC transmembrane type-1 domain maps to 125 to 415 (VIIALSLLVG…LGSVYRELKQ (291 aa)). Residues 147–169 (KQIIDTMNIDWTNEVGVFSTVIG) are Mitochondrial intermembrane-facing. Residues 170 to 193 (SLILAYGGARFGAVLFGELRNAIF) form a helical membrane-spanning segment. The Mitochondrial matrix portion of the chain corresponds to 194–242 (ASVAQSAIRRVAYNTFVKLLNMDLQFHLSRQTGGLTRAIDRGTKGISYV). The helical transmembrane segment at 243–266 (LSAMVFHIIPITLEISIVCGILTY) threads the bilayer. Residue Asn-267 is a topological domain, mitochondrial intermembrane. The helical transmembrane segment at 268 to 288 (YGASFAAMTFVTMLAYSIFTI) threads the bilayer. Over 289 to 354 (QTTAWRTKFR…SSVKIATSLA (66 aa)) the chain is Mitochondrial matrix. Glutathione contacts are provided by residues 294–298 (RTKFR) and 357–360 (NSGQ). The chain crosses the membrane as a helical span at residues 355–373 (FLNSGQNFIFTSALTAMMY). The Mitochondrial intermembrane portion of the chain corresponds to 374–388 (MGCQGVYTGELTVGD). A helical transmembrane segment spans residues 389–410 (LVLINQLVFQLSVPLNFLGSVY). Residue Gly-407 coordinates glutathione. The Mitochondrial matrix segment spans residues 411-750 (RELKQSLLDM…LFNSQTFEKK (340 aa)). The segment at 437–462 (PNAPPLKLNNNNNNNNNNNNNNNNSL) is disordered. Over residues 445–460 (NNNNNNNNNNNNNNNN) the composition is skewed to low complexity. The region spanning 466 to 702 (IRFENVSFGY…QPNSLYAQLW (237 aa)) is the ABC transporter domain. ATP contacts are provided by residues Tyr-475 and 499 to 510 (GPSGSGKSTILR).

Belongs to the ABC transporter superfamily. ABCB family. Heavy Metal importer (TC 3.A.1.210) subfamily. As to quaternary structure, homodimer.

It is found in the mitochondrion inner membrane. Functionally, performs an essential function in the generation of cytoplasmic iron-sulfur proteins by mediating the ATP-dependent export of Fe/S cluster precursors synthesized by NFS1 and other mitochondrial proteins. Hydrolyzes ATP. Binds glutathione and may function by transporting a glutathione-conjugated iron-sulfur compound. In Candida albicans (strain SC5314 / ATCC MYA-2876) (Yeast), this protein is Iron-sulfur clusters transporter ATM1, mitochondrial.